A 238-amino-acid polypeptide reads, in one-letter code: tRNA (guanine-N(7)-)-methyltransferase (238 aa).

Positions 68, 93, 120, and 143 each coordinate S-adenosyl-L-methionine. Asp-143 is an active-site residue. Residues Lys-147, Asp-179, and 216–219 (TKFE) contribute to the substrate site.

It belongs to the class I-like SAM-binding methyltransferase superfamily. TrmB family.

It carries out the reaction guanosine(46) in tRNA + S-adenosyl-L-methionine = N(7)-methylguanosine(46) in tRNA + S-adenosyl-L-homocysteine. It participates in tRNA modification; N(7)-methylguanine-tRNA biosynthesis. Functionally, catalyzes the formation of N(7)-methylguanine at position 46 (m7G46) in tRNA. This Marinobacter nauticus (strain ATCC 700491 / DSM 11845 / VT8) (Marinobacter aquaeolei) protein is tRNA (guanine-N(7)-)-methyltransferase.